The primary structure comprises 554 residues: Exodeoxyribonuclease 7 large subunit (554 aa).

The protein belongs to the XseA family. In terms of assembly, heterooligomer composed of large and small subunits.

The protein resides in the cytoplasm. It catalyses the reaction Exonucleolytic cleavage in either 5'- to 3'- or 3'- to 5'-direction to yield nucleoside 5'-phosphates.. In terms of biological role, bidirectionally degrades single-stranded DNA into large acid-insoluble oligonucleotides, which are then degraded further into small acid-soluble oligonucleotides. The sequence is that of Exodeoxyribonuclease 7 large subunit from Chlamydia pneumoniae (Chlamydophila pneumoniae).